Reading from the N-terminus, the 417-residue chain is uncharacterized protein (417 aa).

4 consecutive transmembrane segments (helical) span residues 87–107, 130–150, 177–197, and 202–222; these read LVVAAACTIVEALNLNLGYWI, IAGTVLGVIVGSLVPYFTPSV, FFITIQALTSLSLAGLDVYAA, and IIDTIIGASLAWAAVSYLWPD. A compositionally biased stretch (low complexity) spans 366–398; sequence APSAPAAAEHKATSSSNSSNSSPGSSNPTTAPT. The interval 366-417 is disordered; sequence APSAPAAAEHKATSSSNSSNSSPGSSNPTTAPTDKFRTGSPKTQPEKISAFW.

Belongs to the YccS/YhfK family.

It localises to the cell membrane. This is an uncharacterized protein from Neisseria gonorrhoeae.